The chain runs to 851 residues: Phosphatidate phosphatase LPIN3 (851 aa).

The N-LIP stretch occupies residues Met-1–Ile-108. Disordered regions lie at residues Ser-114–Asp-385 and Gln-400–Leu-432. The span at Gly-140–Lys-151 shows a compositional bias: basic residues. The short motif at Arg-141–Arg-148 is the Nuclear localization signal element. A Phosphothreonine modification is found at Thr-159. A phosphoserine mark is found at Ser-161, Ser-162, and Ser-224. Over residues Gly-268–Ser-286 the composition is skewed to low complexity. The segment covering Ser-418–Glu-429 has biased composition (basic and acidic residues). Ser-463 carries the post-translational modification Phosphoserine. The segment covering Ser-542–Glu-559 has biased composition (basic and acidic residues). The interval Ser-542–Lys-591 is disordered. Pro residues predominate over residues Ser-578–Thr-587. A C-LIP region spans residues Tyr-590–Glu-792. The DXDXT motif signature appears at Asp-644–Thr-648. The short motif at Leu-655–Leu-659 is the LXXIL motif element.

This sequence belongs to the lipin family. The cofactor is Mg(2+). Significant expression in intestine and other regions of the gastrointestinal tract.

The protein resides in the nucleus. The catalysed reaction is a 1,2-diacyl-sn-glycero-3-phosphate + H2O = a 1,2-diacyl-sn-glycerol + phosphate. Inhibited by N-ethylmaleimide. Functionally, magnesium-dependent phosphatidate phosphatase enzyme which catalyzes the conversion of phosphatidic acid to diacylglycerol during triglyceride, phosphatidylcholine and phosphatidylethanolamine biosynthesis therefore regulates fatty acid metabolism. This Homo sapiens (Human) protein is Phosphatidate phosphatase LPIN3.